The chain runs to 785 residues: MEKKVEAILEFDKIKKQLTEFASSSLGEQAILELAPATDFQVVQKTQLETEEGAKIIRLRGSAPITGLTDVFAHLKRLEIGGDLNGLEIYQIGSNLRVSRQMKNFMNDLLEIGVELPILGALSDELLVLKEVEEDIAISVDESGKVLDTASEALSTIRRTLRRTEDRVREKLESYLRDRNASKMLSDAVITIRNDRYVIPVKQEYKGHYGGIVHDQSASGQTLFIEPQSVVDLNNERKALQAKEKQEIERILAEISASLAAWINEIHHNTFILGRFDFIFAKARFGKAMKAVTPHLSDAGVVHLIAARHPLLDAAKVVANDIYLGEDFTTIVITGPNTGGKTITLKTLGLLTLMAQSGLQIPAQEDSTIAVFEHVFADIGDEQSIEQSLSTFSSHMTNIVSILEKVNQKSLILYDELGAGTDPQEGAALAIAILDASHEKGASVVATTHYPELKAYGYNRVHATNASVEFNVETLSPTYKLLIGVPGRSNAFDISRRLGLSENIITEARSLVDTESADLNDMISSLEEKRNLAETEYEEARELARGADNLLKDLQKEITNYYQQKDKLIEQASEKAATIVEKAEAEAEEIIRELRTMQLNGAAGIKEHELIDAKTRLGNAKPKTINKTIPQAPKQKPHVFQEGDNVRVLSLGQKGTLLNKISDKEWNVQIGIIKMKIKTADLEYIQPEKPKKQRIITSVHSSGSPAKSELDLRGERYEDALQKVDKYLDEALLAGYPQVAIIHGKGTGALRTGVTEYLKNHRMVKSIRFGAAAEGGNGVTIVEFK.

335 to 342 (GPNTGGKT) is an ATP binding site. Positions 710–785 (LDLRGERYED…GNGVTIVEFK (76 aa)) constitute a Smr domain.

Belongs to the DNA mismatch repair MutS family. MutS2 subfamily. Homodimer. Binds to stalled ribosomes, contacting rRNA.

Its function is as follows. Endonuclease that is involved in the suppression of homologous recombination and thus may have a key role in the control of bacterial genetic diversity. In terms of biological role, acts as a ribosome collision sensor, splitting the ribosome into its 2 subunits. Detects stalled/collided 70S ribosomes which it binds and splits by an ATP-hydrolysis driven conformational change. Acts upstream of the ribosome quality control system (RQC), a ribosome-associated complex that mediates the extraction of incompletely synthesized nascent chains from stalled ribosomes and their subsequent degradation. Probably generates substrates for RQC. This chain is Endonuclease MutS2, found in Listeria monocytogenes serovar 1/2a (strain ATCC BAA-679 / EGD-e).